A 144-amino-acid chain; its full sequence is HMG1/2-like protein (144 aa).

Disordered regions lie at residues 1–42 (MKGG…PPSA) and 85–144 (PFIS…EDDD). 2 stretches are compositionally biased toward basic and acidic residues: residues 8 to 35 (AKSD…DPNK) and 89 to 99 (KAEKRKQEYEK). Residues 36-105 (PKRPPSAFFV…EYEKNLQAYN (70 aa)) constitute a DNA-binding region (HMG box). A compositionally biased stretch (acidic residues) spans 126–144 (NDDDEDQDGSGEDDSEDDD).

The protein belongs to the HMGB family. In terms of tissue distribution, expressed at higher levels in dark-grown tissues, such as roots; and at lower levels in light-grown tissues, such as cotyledons and stems.

It is found in the nucleus. The sequence is that of HMG1/2-like protein from Ipomoea nil (Japanese morning glory).